A 530-amino-acid chain; its full sequence is Glutamyl-tRNA reductase 2, chloroplastic (530 aa).

Residues 1–64 (MAVSSAFVVT…RCEISPSNKA (64 aa)) constitute a chloroplast transit peptide. Substrate contacts are provided by residues 134–137 (TCNR), Ser-194, 199–201 (EGQ), and Gln-205. The active-site Nucleophile is the Cys-135. Residue 277–282 (GAGKMG) coordinates NADP(+).

This sequence belongs to the glutamyl-tRNA reductase family. In terms of tissue distribution, expressed in roots and flowers. Detected in leaves, hypocotyls and cotyledons.

The protein localises to the plastid. It localises to the chloroplast. It catalyses the reaction (S)-4-amino-5-oxopentanoate + tRNA(Glu) + NADP(+) = L-glutamyl-tRNA(Glu) + NADPH + H(+). It functions in the pathway porphyrin-containing compound metabolism; protoporphyrin-IX biosynthesis; 5-aminolevulinate from L-glutamyl-tRNA(Glu): step 1/2. Its pathway is porphyrin-containing compound metabolism; chlorophyll biosynthesis. Functionally, catalyzes the NADPH-dependent reduction of glutamyl-tRNA(Glu) to glutamate 1-semialdehyde (GSA). Probably involved in wound-induced supply of heme to defensive hemoproteins outside plastids. In Arabidopsis thaliana (Mouse-ear cress), this protein is Glutamyl-tRNA reductase 2, chloroplastic (HEMA2).